The following is a 360-amino-acid chain: Phospho-N-acetylmuramoyl-pentapeptide-transferase (360 aa).

10 helical membrane-spanning segments follow: residues 25–45 (RGILGVLTALSLALWLGPWMI), 73–93 (TMGGALILSAIAISTLLWADL), 97–117 (YVWVVLIVTLAFGAIGWVDDY), 134–154 (YFWQSVFGLAAAIFLYKTAPT), 168–188 (LAIPLGAGFIVLTYFVIVGSS), 199–219 (GLAIMPTVMVGGALGIFCYLS), 236–256 (AGELIVFCGALIGAGLGFLWF), 263–283 (VFMGDVGALALGAALGTIAVI), 288–308 (VVLFIMGGVFVMETLSVVIQV), and 338–358 (VIVRFWIITVILVLIGLATLK).

It belongs to the glycosyltransferase 4 family. MraY subfamily. Mg(2+) serves as cofactor.

Its subcellular location is the cell inner membrane. The catalysed reaction is UDP-N-acetyl-alpha-D-muramoyl-L-alanyl-gamma-D-glutamyl-meso-2,6-diaminopimeloyl-D-alanyl-D-alanine + di-trans,octa-cis-undecaprenyl phosphate = di-trans,octa-cis-undecaprenyl diphospho-N-acetyl-alpha-D-muramoyl-L-alanyl-D-glutamyl-meso-2,6-diaminopimeloyl-D-alanyl-D-alanine + UMP. Its pathway is cell wall biogenesis; peptidoglycan biosynthesis. Catalyzes the initial step of the lipid cycle reactions in the biosynthesis of the cell wall peptidoglycan: transfers peptidoglycan precursor phospho-MurNAc-pentapeptide from UDP-MurNAc-pentapeptide onto the lipid carrier undecaprenyl phosphate, yielding undecaprenyl-pyrophosphoryl-MurNAc-pentapeptide, known as lipid I. The polypeptide is Phospho-N-acetylmuramoyl-pentapeptide-transferase (Pseudomonas entomophila (strain L48)).